A 177-amino-acid polypeptide reads, in one-letter code: ATP synthase subunit delta (177 aa).

The protein belongs to the ATPase delta chain family. In terms of assembly, F-type ATPases have 2 components, F(1) - the catalytic core - and F(0) - the membrane proton channel. F(1) has five subunits: alpha(3), beta(3), gamma(1), delta(1), epsilon(1). F(0) has three main subunits: a(1), b(2) and c(10-14). The alpha and beta chains form an alternating ring which encloses part of the gamma chain. F(1) is attached to F(0) by a central stalk formed by the gamma and epsilon chains, while a peripheral stalk is formed by the delta and b chains.

It localises to the cell inner membrane. F(1)F(0) ATP synthase produces ATP from ADP in the presence of a proton or sodium gradient. F-type ATPases consist of two structural domains, F(1) containing the extramembraneous catalytic core and F(0) containing the membrane proton channel, linked together by a central stalk and a peripheral stalk. During catalysis, ATP synthesis in the catalytic domain of F(1) is coupled via a rotary mechanism of the central stalk subunits to proton translocation. Functionally, this protein is part of the stalk that links CF(0) to CF(1). It either transmits conformational changes from CF(0) to CF(1) or is implicated in proton conduction. The protein is ATP synthase subunit delta of Serratia proteamaculans (strain 568).